The primary structure comprises 498 residues: Galactose-1-phosphate uridylyltransferase (498 aa).

Belongs to the galactose-1-phosphate uridylyltransferase type 2 family.

The protein resides in the cytoplasm. The enzyme catalyses alpha-D-galactose 1-phosphate + UDP-alpha-D-glucose = alpha-D-glucose 1-phosphate + UDP-alpha-D-galactose. It functions in the pathway carbohydrate metabolism; galactose metabolism. The chain is Galactose-1-phosphate uridylyltransferase from Latilactobacillus sakei subsp. sakei (strain 23K) (Lactobacillus sakei subsp. sakei).